The following is a 955-amino-acid chain: E3 ubiquitin-protein ligase MIB2 (955 aa).

Residue M1 is modified to N-acetylmethionine. The region spanning M1 to A80 is the MIB/HERC2 1 domain. The segment at H86–S138 adopts a ZZ-type zinc-finger fold. Zn(2+) is bound by residues C91, C94, C106, C109, C115, C118, H124, and H128. In terms of domain architecture, MIB/HERC2 2 spans L149–A227. Residue S251 is modified to Phosphoserine. ANK repeat units follow at residues Q464 to L493, E497 to A526, T530 to L559, H563 to A595, Q599 to D628, D633 to V663, K667 to A696, E700 to P728, and R769 to A798. RING-type zinc fingers lie at residues C832–Q867 and C911–R944.

In terms of assembly, interacts with actin monomer. In terms of processing, ubiquitinated. Possibly via autoubiquitination. Expressed in skeletal muscle, and to a lesser extent in heart, brain and kidney.

It is found in the cytoplasm. The protein localises to the endosome. It catalyses the reaction S-ubiquitinyl-[E2 ubiquitin-conjugating enzyme]-L-cysteine + [acceptor protein]-L-lysine = [E2 ubiquitin-conjugating enzyme]-L-cysteine + N(6)-ubiquitinyl-[acceptor protein]-L-lysine.. The protein operates within protein modification; protein ubiquitination. E3 ubiquitin-protein ligase that mediates ubiquitination of Delta receptors, which act as ligands of Notch proteins. Positively regulates the Delta-mediated Notch signaling by ubiquitinating the intracellular domain of Delta, leading to endocytosis of Delta receptors. In Homo sapiens (Human), this protein is E3 ubiquitin-protein ligase MIB2.